The chain runs to 338 residues: Glycerol-3-phosphate dehydrogenase [NAD(P)+] (338 aa).

Ser-14, Tyr-15, His-35, and Lys-109 together coordinate NADPH. Lys-109, Gly-138, and Thr-140 together coordinate sn-glycerol 3-phosphate. Ala-142 is a binding site for NADPH. Lys-194, Asp-247, Ser-257, Arg-258, and Asn-259 together coordinate sn-glycerol 3-phosphate. Residue Lys-194 is the Proton acceptor of the active site. Arg-258 serves as a coordination point for NADPH. Val-282 and Glu-284 together coordinate NADPH.

This sequence belongs to the NAD-dependent glycerol-3-phosphate dehydrogenase family.

Its subcellular location is the cytoplasm. It carries out the reaction sn-glycerol 3-phosphate + NAD(+) = dihydroxyacetone phosphate + NADH + H(+). The catalysed reaction is sn-glycerol 3-phosphate + NADP(+) = dihydroxyacetone phosphate + NADPH + H(+). Its pathway is membrane lipid metabolism; glycerophospholipid metabolism. Catalyzes the reduction of the glycolytic intermediate dihydroxyacetone phosphate (DHAP) to sn-glycerol 3-phosphate (G3P), the key precursor for phospholipid synthesis. The protein is Glycerol-3-phosphate dehydrogenase [NAD(P)+] of Shewanella baltica (strain OS185).